A 60-amino-acid chain; its full sequence is Large ribosomal subunit protein uL29 (60 aa).

It belongs to the universal ribosomal protein uL29 family.

This Fusobacterium nucleatum subsp. nucleatum (strain ATCC 25586 / DSM 15643 / BCRC 10681 / CIP 101130 / JCM 8532 / KCTC 2640 / LMG 13131 / VPI 4355) protein is Large ribosomal subunit protein uL29.